Here is a 271-residue protein sequence, read N- to C-terminus: 3-methyl-2-oxobutanoate hydroxymethyltransferase (271 aa).

The Mg(2+) site is built by D51 and D90. Residues 51–52, D90, and K118 each bind 3-methyl-2-oxobutanoate; that span reads DS. Mg(2+) is bound at residue E120. E186 functions as the Proton acceptor in the catalytic mechanism.

It belongs to the PanB family. In terms of assembly, homodecamer; pentamer of dimers. Mg(2+) is required as a cofactor.

It localises to the cytoplasm. The enzyme catalyses 3-methyl-2-oxobutanoate + (6R)-5,10-methylene-5,6,7,8-tetrahydrofolate + H2O = 2-dehydropantoate + (6S)-5,6,7,8-tetrahydrofolate. Its pathway is cofactor biosynthesis; (R)-pantothenate biosynthesis; (R)-pantoate from 3-methyl-2-oxobutanoate: step 1/2. Its function is as follows. Catalyzes the reversible reaction in which hydroxymethyl group from 5,10-methylenetetrahydrofolate is transferred onto alpha-ketoisovalerate to form ketopantoate. The protein is 3-methyl-2-oxobutanoate hydroxymethyltransferase of Xanthomonas axonopodis pv. citri (strain 306).